Consider the following 127-residue polypeptide: Large ribosomal subunit protein bL12 (127 aa).

Belongs to the bacterial ribosomal protein bL12 family. In terms of assembly, homodimer. Part of the ribosomal stalk of the 50S ribosomal subunit. Forms a multimeric L10(L12)X complex, where L10 forms an elongated spine to which 2 to 4 L12 dimers bind in a sequential fashion. Binds GTP-bound translation factors.

Functionally, forms part of the ribosomal stalk which helps the ribosome interact with GTP-bound translation factors. Is thus essential for accurate translation. The protein is Large ribosomal subunit protein bL12 of Syntrophotalea carbinolica (strain DSM 2380 / NBRC 103641 / GraBd1) (Pelobacter carbinolicus).